A 663-amino-acid chain; its full sequence is F-box protein DAS1 (663 aa).

Residues 46–91 (VFPLTKLPDELMQEVFSHLPQPDRLQLCLVNKRLNKIATKLLYRRI) enclose the F-box domain.

In terms of assembly, interacts with SKP1. Component of the probable SCF(DAS1) complex containing CDC53, SKP1, RBX1 and DAS1.

It functions in the pathway protein modification; protein ubiquitination. Substrate recognition component of a SCF (SKP1-CUL1-F-box protein) E3 ubiquitin-protein ligase complex which mediates the ubiquitination and subsequent proteasomal degradation of target proteins. Probably recognizes and binds to phosphorylated target proteins. The sequence is that of F-box protein DAS1 (DAS1) from Saccharomyces cerevisiae (strain ATCC 204508 / S288c) (Baker's yeast).